The primary structure comprises 474 residues: Replication factor C large subunit (474 aa).

An ATP-binding site is contributed by Gly45–Thr52. Basic and acidic residues predominate over residues Asp415–Met468. The interval Asp415–Phe474 is disordered.

Belongs to the activator 1 small subunits family. RfcL subfamily. Heteromultimer composed of small subunits (RfcS) and large subunits (RfcL).

Part of the RFC clamp loader complex which loads the PCNA sliding clamp onto DNA. The chain is Replication factor C large subunit from Methanococcus aeolicus (strain ATCC BAA-1280 / DSM 17508 / OCM 812 / Nankai-3).